We begin with the raw amino-acid sequence, 1336 residues long: Zinc finger protein 335 (1336 aa).

2 disordered regions span residues 1–108 (MEEN…LVHS) and 199–222 (PTSTSTCLEPAEQPPGEPSSLAQP). Low complexity-rich tracts occupy residues 31-45 (TSEAVSADSTDAATA) and 54-65 (SGVGQSSDSGSR). The C2H2-type 1 zinc finger occupies 247–270 (FKCKMCQYRSSTKATLLRHMRERH). Disordered stretches follow at residues 282–398 (AGKR…PSSS) and 415–442 (VSQSDAENAAPSCQDEADVPPRRRGRPS). Positions 300 to 331 (EEGPEEEEEDDDIVDAGAIDDLEEDSDYNPAE) are enriched in acidic residues. Positions 339 to 349 (LRLQRPTPSTL) are enriched in low complexity. Residues 350 to 361 (RPRRRPGRPRKL) are compositionally biased toward basic residues. Positions 362–373 (PRLETSDLHDGI) are enriched in basic and acidic residues. Over residues 378–387 (VSSQSTQSPP) the composition is skewed to polar residues. 8 C2H2-type zinc fingers span residues 465-487 (YLCRICGSRFLSHEDLRFHVNSH), 495-517 (FKCLQCSYRSRRWSSLKEHMFNH), 523-545 (YKCDECSYTSVYRKDVIRHAAVH), 562-584 (FPCPVCGRVYPMQKRLTQHMKTH), 590-612 (HMCDKCGKSFKKRYTFKMHLLTH), 621-643 (FKCEFCEFVCEDKKALLNHQLSH), 649-672 (FKCSFCPYRTFREDFLLSHVAVKH), and 678-701 (FACEYCHFSTRHKKNLRLHVRCRH). 2 disordered regions span residues 732-766 (LKQQHSAAPGPPLSSAGPEAPQEPAPFQPPETPPL) and 961-1013 (LQCG…AAAS). Residues 752–766 (PQEPAPFQPPETPPL) show a composition bias toward pro residues. Residues Ser-975 and Ser-1006 each carry the phosphoserine modification. 4 consecutive C2H2-type zinc fingers follow at residues 1018-1040 (FSCKVCSEAFPSRAEMESHKRAH), 1046-1068 (FKCPDCPFSARQWPEVRAHMAQH), 1074-1096 (HQCNQCSFASKNKKDLRRHMLTH), and 1102-1125 (FSCHVCGQRFNRNGHLKFHIQRLH). Lys-1021 is covalently cross-linked (Glycyl lysine isopeptide (Lys-Gly) (interchain with G-Cter in SUMO2)). Position 1148 is a phosphoserine (Ser-1148).

The protein belongs to the krueppel C2H2-type zinc-finger protein family. Interacts with NCOA6; may enhance ligand-dependent transcriptional activation by nuclear hormone receptors. Interacts with CNOT6. Interacts with CNOT9; the interaction is direct. Component of a nuclear receptor-mediated transcription complex composed of at least ZNF335, CCAR2 and EMSY; the complex stimulates the transcription of nuclear receptor target genes such as SOX9 and HOXA1. Within the complex interacts with EMSY and interacts (via C-terminus) with CCAR2. Interacts with members of histone H3'Lys4'(H3K4) methyltransferase complexes ASH2L, CXXC1, KMT2A/MLL1, RBBP5, SETD1A and WDR5. Component of a histone methylation complex composed of at least ZNF335, RBBP5, ASH2L and WDR5; the complex may have histone H3-specific methyltransferase activity, however does not have specificity for 'Lys-4' of histone H3. Interacts with RBBP5 and WDR5. Interacts with ASHL2. Components of this complex may associate with components of the ZNF335-CCAR2-EMSY nuclear receptor-mediated transcription complex to form a complex at least composed of ZNF335, HCFC1, CCAR2, EMSY, MKI67, RBBP5, ASH2L and WDR5. Within this complex also interacts with HCFC1 and MKI67.

It localises to the nucleus. Functionally, component or associated component of some histone methyltransferase complexes may regulate transcription through recruitment of those complexes on gene promoters. Enhances ligand-dependent transcriptional activation by nuclear hormone receptors. Plays an important role in neural progenitor cell proliferation and self-renewal through the regulation of specific genes involved brain development, including REST. Also controls the expression of genes involved in somatic development and regulates, for instance, lymphoblast proliferation. This chain is Zinc finger protein 335 (Znf335), found in Rattus norvegicus (Rat).